Consider the following 733-residue polypeptide: Phosphoribosylformylglycinamidine synthase subunit PurL (733 aa).

The active site involves His-32. Tyr-35 contacts ATP. Glu-81 contributes to the Mg(2+) binding site. Residues 82 to 85 (SHNH) and Arg-104 each bind substrate. Catalysis depends on His-83, which acts as the Proton acceptor. Mg(2+) is bound at residue Asp-105. Gln-230 contacts substrate. Asp-258 is a binding site for Mg(2+). Residue 301–303 (ESQ) participates in substrate binding. ATP is bound by residues Asp-482 and Gly-519. Position 520 (Asn-520) interacts with Mg(2+). Substrate is bound at residue Ser-522.

It belongs to the FGAMS family. Monomer. Part of the FGAM synthase complex composed of 1 PurL, 1 PurQ and 2 PurS subunits.

It is found in the cytoplasm. The catalysed reaction is N(2)-formyl-N(1)-(5-phospho-beta-D-ribosyl)glycinamide + L-glutamine + ATP + H2O = 2-formamido-N(1)-(5-O-phospho-beta-D-ribosyl)acetamidine + L-glutamate + ADP + phosphate + H(+). The protein operates within purine metabolism; IMP biosynthesis via de novo pathway; 5-amino-1-(5-phospho-D-ribosyl)imidazole from N(2)-formyl-N(1)-(5-phospho-D-ribosyl)glycinamide: step 1/2. In terms of biological role, part of the phosphoribosylformylglycinamidine synthase complex involved in the purines biosynthetic pathway. Catalyzes the ATP-dependent conversion of formylglycinamide ribonucleotide (FGAR) and glutamine to yield formylglycinamidine ribonucleotide (FGAM) and glutamate. The FGAM synthase complex is composed of three subunits. PurQ produces an ammonia molecule by converting glutamine to glutamate. PurL transfers the ammonia molecule to FGAR to form FGAM in an ATP-dependent manner. PurS interacts with PurQ and PurL and is thought to assist in the transfer of the ammonia molecule from PurQ to PurL. This chain is Phosphoribosylformylglycinamidine synthase subunit PurL, found in Methanocaldococcus jannaschii (strain ATCC 43067 / DSM 2661 / JAL-1 / JCM 10045 / NBRC 100440) (Methanococcus jannaschii).